The following is a 557-amino-acid chain: Acid-sensing ion channel 1B (557 aa).

The Cytoplasmic segment spans residues M1 to V98. A compositionally biased stretch (basic and acidic residues) spans K36–E45. The tract at residues K36–E57 is disordered. Acidic residues predominate over residues E46–E57. A helical transmembrane segment spans residues F99 to I115. The Extracellular portion of the chain corresponds to Y116 to E460. N-linked (GlcNAc...) asparagine glycans are attached at residues N133 and N194. Cystine bridges form between C142-C229, C207-C214, C325-C400, C343-C396, C347-C394, C356-C378, and C358-C370. N-linked (GlcNAc...) asparagine glycans are attached at residues N401 and N428. Residues L461–Y491 form a discontinuously helical membrane-spanning segment. The GAS motif; ion selectivity filter motif lies at G477 to S479. The Cytoplasmic portion of the chain corresponds to E492 to C557.

This sequence belongs to the amiloride-sensitive sodium channel (TC 1.A.6) family. ASIC1 subfamily. Homotrimer. Heterotrimer; with other ASIC proteins producing channel with different properties. In terms of tissue distribution, expressed in central nervous system.

It localises to the cell membrane. The protein localises to the postsynaptic cell membrane. The protein resides in the cell projection. It is found in the dendrite. It catalyses the reaction Na(+)(in) = Na(+)(out). It carries out the reaction K(+)(in) = K(+)(out). The catalysed reaction is Li(+)(in) = Li(+)(out). The enzyme catalyses Ca(2+)(in) = Ca(2+)(out). Inhibited by the diuretic drug amiloride. Forms voltage-independent, pH-gated trimeric sodium channels that act as postsynaptic excitatory receptors in the nervous system, playing a crucial role in regulating synaptic plasticity, learning, and memory. Upon extracellular pH drop this channel elicits transient, fast activating, and completely desensitizing inward currents. Displays high selectivity for sodium ions but can also permit the permeation of other cations. In Danio rerio (Zebrafish), this protein is Acid-sensing ion channel 1B (asic1b).